The following is a 252-amino-acid chain: Probable anguibactin biosynthesis thioesterase AngT (252 aa).

Residues serine 92 and histidine 229 contribute to the active site.

This sequence belongs to the thioesterase family.

It functions in the pathway siderophore biosynthesis; anguibactin biosynthesis. In terms of biological role, probable thioesterase. Involved in anguibactin production, but is not essential for virulence or iron transport gene expression. In Vibrio anguillarum (strain ATCC 68554 / 775) (Listonella anguillarum), this protein is Probable anguibactin biosynthesis thioesterase AngT (angT).